The chain runs to 841 residues: MSSIARPPDPCLVAIILIVRSRAGPRFVFHYPPNPLSENGLRPVRKERRTSRSKNGQGYKSNESSSSEESGSSSDDDEDEHQRQLQSQNQSQSHLSGSVVSGRRSSNFGLDDHVAMSVSPGGDSQRAGSMGSGRTSFRKRGGNSDVEEDSGAASDRQEDGSGGAGGPYRPPWESLLGLPADVWEKLLSPSPAWHKRRFEVGINDLAFIGWPVFVREDGTWRKQRRKKKKKWRAEWEGGELGHNENAEDAPDDEDGDAGGNASGGGGLMAASTETLSPKQMALSEAKRGSGSSSKAARSSVDCLDGDDKDSMTMFNVVFVLDPPLLEYSMRTREIYDNIIKKFAKALKWEQARTDYVWREAQHISHLKEKAKERRTSLNTLYTELINQSSLARAIYTVYTSISASKIASVQLSPDVSISLQIPPLTSTPYLPGPTDKAYPGLWLTTADSVTPVEDPTADENTAPHQVLAKHFALLLLDNEAAILKDVEASGGALAPALAHYLRCSKPTKSFAQISASSGIPLSTIQMLASHLVYWRRARAIPPIHQRDTYIVSPNCDLSKLEIATAAYQVAFPTLPSLPKMLSALSGTPRPYGSFIPSKDHKETYFAILAWLLRGGWVTQLRSFARVKVTPEIKMAVEVALRREEVDKYLRKGRSLEAQKSADGENGNEADENDDASSSSSSSLASQGSGDETPMPGRYQQESNLRLSHSMLDRNTSLRTSSLILFPHRASPLESRWLEQIVSRFPEHPRTAGRHRRGEGSNAAGGEIDPEYAALSTPMKDLWPTYIKYFNGLDALEKIPVREGLKRKLVWQVLTRLGLVTSQQSSIELDPREQVLVSVRHW.

A signal peptide spans 1–23 (MSSIARPPDPCLVAIILIVRSRA). Disordered regions lie at residues 30 to 172 (HYPP…RPPW), 221 to 301 (RKQR…SSVD), and 656 to 698 (EAQK…PGRY). The segment covering 43–52 (PVRKERRTSR) has biased composition (basic residues). 2 stretches are compositionally biased toward low complexity: residues 61 to 73 (SNES…SGSS) and 84 to 106 (QLQS…RRSS). The span at 221–231 (RKQRRKKKKKW) shows a compositional bias: basic residues. The segment covering 232 to 245 (RAEWEGGELGHNEN) has biased composition (basic and acidic residues). Residues 246–256 (AEDAPDDEDGD) are compositionally biased toward acidic residues. The segment covering 257–267 (AGGNASGGGGL) has biased composition (gly residues). Low complexity predominate over residues 288–299 (GSGSSSKAARSS). Over residues 665 to 674 (NGNEADENDD) the composition is skewed to acidic residues. The segment covering 675–689 (ASSSSSSSLASQGSG) has biased composition (low complexity).

The protein belongs to the NPR3 family.

In terms of biological role, mediates inactivation of the TORC1 complex in response to amino acid starvation. Required for meiotic nuclear division. The chain is Nitrogen permease regulator 3 (npr3) from Neosartorya fischeri (strain ATCC 1020 / DSM 3700 / CBS 544.65 / FGSC A1164 / JCM 1740 / NRRL 181 / WB 181) (Aspergillus fischerianus).